The following is a 199-amino-acid chain: Large ribosomal subunit protein bL25 (199 aa).

It belongs to the bacterial ribosomal protein bL25 family. CTC subfamily. As to quaternary structure, part of the 50S ribosomal subunit; part of the 5S rRNA/L5/L18/L25 subcomplex. Contacts the 5S rRNA. Binds to the 5S rRNA independently of L5 and L18.

In terms of biological role, this is one of the proteins that binds to the 5S RNA in the ribosome where it forms part of the central protuberance. The protein is Large ribosomal subunit protein bL25 of Pelobacter propionicus (strain DSM 2379 / NBRC 103807 / OttBd1).